The chain runs to 476 residues: NAD(+) hydrolase ThsA (476 aa).

The Deacetylase sirtuin-type domain occupies 4–283 (NPIVELFIKD…QRIENNIKTK (280 aa)). NAD(+) contacts are provided by Ala-23, Asp-114, and His-152. The active-site Proton acceptor is the His-152. The tract at residues 284-476 (TVFLSGSAVE…IIEFVEILSN (193 aa)) is SLOG (STALD) domain, binds 3'cADPR. 3'cADPR contacts are provided by Gly-289, Ser-290, Leu-326, Phe-357, Arg-371, Lys-388, Gly-399, and Glu-403.

This sequence belongs to the soluble Thoeris ThsA family. Homotetramer formed by dimer of dimers; homooctamers are occasionally seen. Not seen to interact with ThsB. In the absence of the signal generated by ThsB, 63% monomer and 20% homotetramer; in the presence of the ThsB signal product 40% of the protein is dimeric. Homotetramer in solution; probably dimerizes via the N-terminal sirtuin-like domain.

Its subcellular location is the cytoplasm. It catalyses the reaction NAD(+) + H2O = ADP-D-ribose + nicotinamide + H(+). With respect to regulation, activated by a molecule generated by endogenous ThsB (AC J8G8J6) or ThsB' (AC J8CSK2); activation in vitro is 50-100x more sensitive to 3' cyclic ADP-D-ribose (3'cADPR) than 2'cADPR. 3'cADPR activates the NADase function of ThsA by binding to the SLOG domain, which changes its tetramer organization, allowing NAD to access the active site. Also activated by a signal molecule generated by B.dafuensis TIR1 (AC A0A5B8Z670) and TIR2 (AC A0A5B8Z260), and by BdTIR (AC I1GTC2), a plant protein involved in defense against bacterial infection. The signal produced by BdTIR is probably 2'cADPR, which activates this protein, the signal produced by endogenous ThsB' is probably 3'cADPR. In terms of biological role, NAD(+) hydrolyzing component (NADase) of the Thoeris antiviral defense system, composed of ThsA and ThsB. Activated by a signal molecule generated by endogenous ThsB (AC J8G8J6) or ThsB' (AC J8CSK2, probably 3'cADPR), by TIR1 and TIR2 from B.dafuensis or by BdTIR from B.distachyon (AC I1GTC2, probably 2'cADPR). Upon activation binds and hydrolyzes NAD(+), leading to cell death and inhibition of phage replication. Not seen to bind DNA. Activation is 50-100x more sensitive to 3' cyclic ADP-D-ribose (3'cADPR) than 2'cADPR. In another paper ThsA is not activated by any tested cADPR isomer, although it binds 3'cADPR; it was suggested the protein is already in a fully active state. Expression of ThsA and ThsB in B.subtilis (strain BEST7003) confers resistance to phages phi29, SBSphiC, SBSphiJ and SPO1. At multiplicity of infection (MOI) of 0.05 Thoeris-encoding cultures grow normally when infected with SPO1, at MOI 5 cultures collapse prematurely by 90 minutes post-infection, thus the phage are not able to complete a replication cycle. NAD(+) levels fall and ADP-D-ribose levels rise 60 minutes post-infection. Thoeris cultures eventually recover, but retain the same susceptibility to SPO1. This chain is NAD(+) hydrolase ThsA, found in Bacillus cereus (strain MSX-D12).